A 234-amino-acid chain; its full sequence is NAD-dependent protein deacetylase (234 aa).

The Deacetylase sirtuin-type domain maps to Met-1–Val-234. Positions 23, 27, 35, 99, 101, 102, 117, 184, 185, 208, and 226 each coordinate NAD(+). Residues Ile-101 and Asp-102 each coordinate nicotinamide. The Proton acceptor role is filled by His-117.

This sequence belongs to the sirtuin family. Class U subfamily.

Its subcellular location is the cytoplasm. It catalyses the reaction N(6)-acetyl-L-lysyl-[protein] + NAD(+) + H2O = 2''-O-acetyl-ADP-D-ribose + nicotinamide + L-lysyl-[protein]. NAD-dependent protein deacetylase which modulates the activities of several enzymes which are inactive in their acetylated form. This chain is NAD-dependent protein deacetylase, found in Lactiplantibacillus plantarum (strain ATCC BAA-793 / NCIMB 8826 / WCFS1) (Lactobacillus plantarum).